A 75-amino-acid polypeptide reads, in one-letter code: Small ribosomal subunit protein bS18 (75 aa).

The protein belongs to the bacterial ribosomal protein bS18 family. Part of the 30S ribosomal subunit. Forms a tight heterodimer with protein bS6.

Binds as a heterodimer with protein bS6 to the central domain of the 16S rRNA, where it helps stabilize the platform of the 30S subunit. This is Small ribosomal subunit protein bS18 from Acinetobacter baumannii (strain AB307-0294).